Consider the following 407-residue polypeptide: CCA-adding enzyme (407 aa).

Gly32 and Arg35 together coordinate ATP. Residues Gly32 and Arg35 each contribute to the CTP site. Asp45 and Asp47 together coordinate Mg(2+). Arg116, Asp159, Arg162, Arg165, and Arg168 together coordinate ATP. CTP is bound by residues Arg116, Asp159, Arg162, Arg165, and Arg168.

The protein belongs to the tRNA nucleotidyltransferase/poly(A) polymerase family. Bacterial CCA-adding enzyme type 3 subfamily. In terms of assembly, homodimer. It depends on Mg(2+) as a cofactor.

It carries out the reaction a tRNA precursor + 2 CTP + ATP = a tRNA with a 3' CCA end + 3 diphosphate. The enzyme catalyses a tRNA with a 3' CCA end + 2 CTP + ATP = a tRNA with a 3' CCACCA end + 3 diphosphate. Functionally, catalyzes the addition and repair of the essential 3'-terminal CCA sequence in tRNAs without using a nucleic acid template. Adds these three nucleotides in the order of C, C, and A to the tRNA nucleotide-73, using CTP and ATP as substrates and producing inorganic pyrophosphate. tRNA 3'-terminal CCA addition is required both for tRNA processing and repair. Also involved in tRNA surveillance by mediating tandem CCA addition to generate a CCACCA at the 3' terminus of unstable tRNAs. While stable tRNAs receive only 3'-terminal CCA, unstable tRNAs are marked with CCACCA and rapidly degraded. This is CCA-adding enzyme from Lactiplantibacillus plantarum (strain ATCC BAA-793 / NCIMB 8826 / WCFS1) (Lactobacillus plantarum).